The chain runs to 456 residues: Trigger factor (456 aa).

One can recognise a PPIase FKBP-type domain in the interval G192–P277.

This sequence belongs to the FKBP-type PPIase family. Tig subfamily.

It is found in the cytoplasm. The catalysed reaction is [protein]-peptidylproline (omega=180) = [protein]-peptidylproline (omega=0). In terms of biological role, involved in protein export. Acts as a chaperone by maintaining the newly synthesized protein in an open conformation. Functions as a peptidyl-prolyl cis-trans isomerase. This chain is Trigger factor, found in Streptococcus pyogenes serotype M4 (strain MGAS10750).